The chain runs to 941 residues: Lysine-specific demethylase 7A (941 aa).

The PHD-type zinc finger occupies 37-88 (PVYCVCRQPYDVNRFMIECDICKDWFHGSCVGVEEHHAVDIDLYHCPNCAVL). A linker region spans residues 97–114 (RRNWHRHDYTEIDDGSKP). A JmjC domain is found at 230–386 (FSDTKMSELV…MQLRCYEMEK (157 aa)). Threonine 279 contacts substrate. Fe cation contacts are provided by histidine 282 and aspartate 284. Lysine 299 contacts substrate. Histidine 354 contributes to the Fe cation binding site. 3 disordered regions span residues 597 to 633 (QSLY…EHEE), 677 to 700 (TTEE…KEES), and 819 to 921 (QDLS…MATA). Serine 604 carries the phosphoserine modification. 2 stretches are compositionally biased toward basic and acidic residues: residues 618-633 (MKIE…EHEE) and 685-700 (GDEK…KEES). Over residues 834 to 876 (SEISQRVQSRNYVDSSGSSLQNGKYMQNSNLTSGACQISNGSL) the composition is skewed to polar residues.

It belongs to the JHDM1 histone demethylase family. JHDM1D subfamily. The cofactor is Fe(2+).

The protein resides in the nucleus. It carries out the reaction N(6),N(6)-dimethyl-L-lysyl(9)-[histone H3] + 2 2-oxoglutarate + 2 O2 = L-lysyl(9)-[histone H3] + 2 formaldehyde + 2 succinate + 2 CO2. The enzyme catalyses N(6),N(6)-dimethyl-L-lysyl(27)-[histone H3] + 2 2-oxoglutarate + 2 O2 = L-lysyl(27)-[histone H3] + 2 formaldehyde + 2 succinate + 2 CO2. It catalyses the reaction N(6),N(6)-dimethyl-L-lysyl(36)-[histone H3] + 2-oxoglutarate + O2 = N(6)-methyl-L-lysyl(36)-[histone H3] + formaldehyde + succinate + CO2. The catalysed reaction is N(6)-methyl-L-lysyl(20)-[histone H4] + 2-oxoglutarate + O2 = L-lysyl(20)-[histone H4] + formaldehyde + succinate + CO2. Its function is as follows. Histone demethylase required for brain development. Specifically demethylates dimethylated 'Lys-9', 'Lys-27' and 'Lys-36' (H3K9me2, H3K27me2, H3K36me2, respectively) of histone H3 and monomethylated histone H4 'Lys-20' residue (H4K20Me1), thereby playing a central role in histone code. Specifically binds trimethylated 'Lys-4' of histone H3 (H3K4me3), affecting histone demethylase specificity: in presence of H3K4me3, it has no demethylase activity toward H3K9me2, while it has high activity toward H3K27me2. Demethylates H3K9me2 in absence of H3K4me3. Has activity toward H4K20Me1 only when nucleosome is used as a substrate and when not histone octamer is used as substrate. The protein is Lysine-specific demethylase 7A (KDM7A) of Homo sapiens (Human).